A 296-amino-acid chain; its full sequence is Nicotinate dehydrogenase FAD-subunit (296 aa).

The FAD-binding PCMH-type domain maps to 1-179 (MKDFEFFAPK…TEVIIDRPDA (179 aa)). FAD is bound by residues 29-36 (IIAGGTDL), Gly101, 110-114 (TIGGN), Asp123, Arg160, Met169, and Lys187.

In terms of assembly, heterooctamer of NDHM, NDHL, NDHS and NDHF. Dimer of heterotetramers. FAD is required as a cofactor.

It catalyses the reaction nicotinate + NADP(+) + H2O = 6-hydroxynicotinate + NADPH + H(+). It functions in the pathway cofactor degradation; nicotinate degradation; 6-hydroxynicotinate from nicotinate: step 1/1. Reversibly inactivated by selenide and sulfide. Not inhibited by cyanide. In terms of biological role, catalyzes the hydroxylation of nicotinate to 6-hydroxynicotinate. Also active against 2-pyrazinecarboxylic acid, but inactive against other nicotinate analogs. The chain is Nicotinate dehydrogenase FAD-subunit (ndhF) from Eubacterium barkeri (Clostridium barkeri).